Here is a 367-residue protein sequence, read N- to C-terminus: Glutamate 5-kinase (367 aa).

K10 contacts ATP. Substrate contacts are provided by S50, D137, and N149. ATP is bound by residues 169-170 (TD) and 211-217 (TGGMETK). The PUA domain occupies 275 to 353 (AGDITVDDGA…QDISDILGYE (79 aa)).

It belongs to the glutamate 5-kinase family.

It is found in the cytoplasm. The enzyme catalyses L-glutamate + ATP = L-glutamyl 5-phosphate + ADP. The protein operates within amino-acid biosynthesis; L-proline biosynthesis; L-glutamate 5-semialdehyde from L-glutamate: step 1/2. Its function is as follows. Catalyzes the transfer of a phosphate group to glutamate to form L-glutamate 5-phosphate. The polypeptide is Glutamate 5-kinase (Sodalis glossinidius (strain morsitans)).